Reading from the N-terminus, the 558-residue chain is MAKFVFVTGGVVSSIGKGIVAASLGRLLKSRGYSVSILKLDPYLNVDPGTMSPFQHGEVFVTEDGAETDLDLGHYERFTDTAMSRLNSVTTGSIYQAVINKERRGDYNGGTVQVIPHITGEIRERIHRVAANSGADVVITEIGGTVGDIESLPFLEAIREFRGDVGRNDLAYIHVTLLPFIGTSGELKTKPTQHSVKELRAIGIQPDVLVCRSDRPINEDLKSKIGGFCGVPNRAVITALDADSIYAVPISLEEEGLCLEMLDVLNLTDHDSDMKSWVELVHKLRNPGPAVKVALVGKYVQLNDAYLSVVEALRHACLTQDASLELSWVCAEQIETHGPENLLKGMDAVVVPGGFGNRGVDGKVAAIRWAREQRVPFLGLCLGMQCAVIEWARNQAGLTGASSSELEPDTNHPVIHLLPEQQDVVDLGGTMRLGVYPCRIAPDTLAQKLYGEQVVYERHRHRYEFNNSYRNLFIESGYTISGSSPDGRLVELIELKGHPFFTACQYHPEFLSRPGKPHPLFRGLIEAAQLRLPASPDEALRRQSQTNISAQEQPSRIG.

Residues 1–267 (MAKFVFVTGG…CLEMLDVLNL (267 aa)) are amidoligase domain. Position 13 (Ser-13) interacts with CTP. UTP is bound at residue Ser-13. Residues 14–19 (SIGKGI) and Asp-71 contribute to the ATP site. 2 residues coordinate Mg(2+): Asp-71 and Glu-141. CTP is bound by residues 148–150 (DIE), 188–193 (KTKPTQ), and Lys-224. UTP is bound by residues 188-193 (KTKPTQ) and Lys-224. Positions 292–534 (KVALVGKYVQ…IEAAQLRLPA (243 aa)) constitute a Glutamine amidotransferase type-1 domain. Residue Gly-354 coordinates L-glutamine. Cys-381 acts as the Nucleophile; for glutamine hydrolysis in catalysis. Residues 382–385 (LGMQ), Glu-405, and Arg-462 contribute to the L-glutamine site. Catalysis depends on residues His-507 and Glu-509. A disordered region spans residues 536 to 558 (PDEALRRQSQTNISAQEQPSRIG). A compositionally biased stretch (polar residues) spans 542-558 (RQSQTNISAQEQPSRIG).

The protein belongs to the CTP synthase family. Homotetramer.

The enzyme catalyses UTP + L-glutamine + ATP + H2O = CTP + L-glutamate + ADP + phosphate + 2 H(+). The catalysed reaction is L-glutamine + H2O = L-glutamate + NH4(+). It carries out the reaction UTP + NH4(+) + ATP = CTP + ADP + phosphate + 2 H(+). It functions in the pathway pyrimidine metabolism; CTP biosynthesis via de novo pathway; CTP from UDP: step 2/2. Allosterically activated by GTP, when glutamine is the substrate; GTP has no effect on the reaction when ammonia is the substrate. The allosteric effector GTP functions by stabilizing the protein conformation that binds the tetrahedral intermediate(s) formed during glutamine hydrolysis. Inhibited by the product CTP, via allosteric rather than competitive inhibition. Catalyzes the ATP-dependent amination of UTP to CTP with either L-glutamine or ammonia as the source of nitrogen. Regulates intracellular CTP levels through interactions with the four ribonucleotide triphosphates. This Prochlorococcus marinus (strain MIT 9313) protein is CTP synthase.